The primary structure comprises 837 residues: Semaphorin-4B (837 aa).

An N-terminal signal peptide occupies residues 1–43 (MLRTAMGLRSWLAAPWGALPPRPPLLLLLLLLLLLQPPPPTWA). The Extracellular portion of the chain corresponds to 44–717 (LSPRISLPLG…WGADRSYWKE (674 aa)). The region spanning 47 to 523 (RISLPLGSEE…SHSGVVQVPM (477 aa)) is the Sema domain. Residues Asn-69 and Asn-96 are each glycosylated (N-linked (GlcNAc...) asparagine). Disulfide bonds link Cys-120–Cys-131 and Cys-149–Cys-158. N-linked (GlcNAc...) asparagine glycosylation is present at Asn-165. Disulfide bonds link Cys-286/Cys-399 and Cys-310/Cys-359. N-linked (GlcNAc...) asparagine glycosylation is found at Asn-410 and Asn-525. The 55-residue stretch at 525 to 579 (NCSLYRSCGDCLLARDPYCAWSGSSCKHVSLYQPQLATRPWIQDIEGASAKDLCS) folds into the PSI domain. 2 cysteine pairs are disulfide-bonded: Cys-526-Cys-543 and Cys-611-Cys-656. In terms of domain architecture, Ig-like C2-type spans 604 to 663 (NTVNTLACPLLSNLATRLWLRNGAPVNASASCHVLPTGDLLLVGTQQLGEFQCWSLEEGF). Residue Asn-630 is glycosylated (N-linked (GlcNAc...) asparagine). The chain crosses the membrane as a helical span at residues 718–738 (FLVMCTLFVLAVLLPVLFLLY). Over 739–837 (RHRNSMKVFL…LGSEIRDSVV (99 aa)) the chain is Cytoplasmic. The interval 767 to 805 (PETRPLNGLGPPSTPLDHRGYQSLSDSPPGSRVFTESEK) is disordered. Residues Ser-793, Ser-818, and Ser-830 each carry the phosphoserine modification.

This sequence belongs to the semaphorin family.

The protein resides in the membrane. Its function is as follows. Inhibits axonal extension by providing local signals to specify territories inaccessible for growing axons. This is Semaphorin-4B from Homo sapiens (Human).